The sequence spans 287 residues: ATP synthase gamma chain (287 aa).

The protein belongs to the ATPase gamma chain family. As to quaternary structure, F-type ATPases have 2 components, CF(1) - the catalytic core - and CF(0) - the membrane proton channel. CF(1) has five subunits: alpha(3), beta(3), gamma(1), delta(1), epsilon(1). CF(0) has three main subunits: a, b and c.

Its subcellular location is the cell inner membrane. Produces ATP from ADP in the presence of a proton gradient across the membrane. The gamma chain is believed to be important in regulating ATPase activity and the flow of protons through the CF(0) complex. The chain is ATP synthase gamma chain from Ectopseudomonas mendocina (strain ymp) (Pseudomonas mendocina).